Reading from the N-terminus, the 474-residue chain is Glutamate--tRNA ligase (474 aa).

Residues 9-19 (PSPTGYLHVGG) carry the 'HIGH' region motif. A 'KMSKS' region motif is present at residues 240–244 (KLSKR). Lys243 contributes to the ATP binding site.

Belongs to the class-I aminoacyl-tRNA synthetase family. Glutamate--tRNA ligase type 1 subfamily. As to quaternary structure, monomer.

Its subcellular location is the cytoplasm. It catalyses the reaction tRNA(Glu) + L-glutamate + ATP = L-glutamyl-tRNA(Glu) + AMP + diphosphate. Functionally, catalyzes the attachment of glutamate to tRNA(Glu) in a two-step reaction: glutamate is first activated by ATP to form Glu-AMP and then transferred to the acceptor end of tRNA(Glu). The protein is Glutamate--tRNA ligase of Aliivibrio fischeri (strain ATCC 700601 / ES114) (Vibrio fischeri).